A 502-amino-acid chain; its full sequence is Ubiquitin-like-specific protease 1A (502 aa).

Active-site residues include histidine 393, aspartate 410, and cysteine 461.

The protein belongs to the peptidase C48 family.

Functionally, protease that catalyzes two essential functions in the SUMO pathway: processing of full-length SUMOs to their mature forms and deconjugation of SUMO from targeted proteins. Cleaves precursors of SUM1 and SUM2, and very inefficiently of SUM3. Seems to be the only ULP1 able to cleave SUM3 precursors. Cleaves SUMO peptides better than SUMO-conjugated proteins. In Arabidopsis thaliana (Mouse-ear cress), this protein is Ubiquitin-like-specific protease 1A (ULP1A).